Reading from the N-terminus, the 274-residue chain is 5-deoxy-glucuronate isomerase (274 aa).

Belongs to the isomerase IolB family.

The catalysed reaction is 5-deoxy-D-glucuronate = 5-dehydro-2-deoxy-D-gluconate. Its pathway is polyol metabolism; myo-inositol degradation into acetyl-CoA; acetyl-CoA from myo-inositol: step 4/7. In terms of biological role, involved in the isomerization of 5-deoxy-glucuronate (5DG) to 5-dehydro-2-deoxy-D-gluconate (DKG or 2-deoxy-5-keto-D-gluconate). This chain is 5-deoxy-glucuronate isomerase, found in Geobacillus thermodenitrificans (strain NG80-2).